A 599-amino-acid chain; its full sequence is MRTHYCGQLNAALDGQIVTLCGWAHRRRDHGGVIFIDLRDREGLAQVVCDPDRADTFKIAESVRNEFCLKITGKVRPRPAGTTNANLASGEIEILCHEIEVLNPSVTPPFQLDEDNLSENVRLLHRVIDLRRPQMQNNLMLRYKTSRAFRRFLDDNGFIDIETPMLTKSTPEGARDYLVPSRVHPGQFFALPQSPQLFKQLLMVAGYDRYYQIVKCFRDEDLRADRQPEFTQVDIETSFMSEAEIMALTEKLIRTVFKEAIDVDLPDFPRMTYAEAMHRFGSDKPDLRVTLELTEVTDAFKDVAFKVFAGVANSEGGRIAAMRIPGGATLTRGEIDAYTQFVGIYGAKGLAYIKVNDASQINETGLQSPIVKNLSEASLKAVIERTGAQSGDLIFFGADKAKIVNDALGALRIKIGHEKGFVTGAKWAPLWVIDFPMFEYDDESKRWTACHHPFTSPKDEHLDLLVSDPGKCLAKAYDLALNGWELGGGSVRIHRSDVQEKVFSALNIGPEEQQAKFGFLLDALKYGAPPHGGLAFGLDRIVTMMTGAESIRDVIAFPKTQRAQCLLTDAPSGVDEKQLRELHIRLRQKVETQVEVGQP.

Residue E172 participates in L-aspartate binding. Positions 196–199 (QLFK) are aspartate. R218 is a binding site for L-aspartate. ATP-binding positions include 218-220 (RDE) and Q227. H451 serves as a coordination point for L-aspartate. Position 485 (E485) interacts with ATP. R492 lines the L-aspartate pocket. 537-540 (GLDR) provides a ligand contact to ATP.

This sequence belongs to the class-II aminoacyl-tRNA synthetase family. Type 1 subfamily. As to quaternary structure, homodimer.

Its subcellular location is the cytoplasm. The enzyme catalyses tRNA(Asx) + L-aspartate + ATP = L-aspartyl-tRNA(Asx) + AMP + diphosphate. Its function is as follows. Aspartyl-tRNA synthetase with relaxed tRNA specificity since it is able to aspartylate not only its cognate tRNA(Asp) but also tRNA(Asn). Reaction proceeds in two steps: L-aspartate is first activated by ATP to form Asp-AMP and then transferred to the acceptor end of tRNA(Asp/Asn). This chain is Aspartate--tRNA(Asp/Asn) ligase, found in Dechloromonas aromatica (strain RCB).